A 346-amino-acid polypeptide reads, in one-letter code: Probable RNA methyltransferase PA1839 (346 aa).

Glu91 acts as the Proton acceptor in catalysis. The Radical SAM core domain occupies 94–320 (LLPRGGLCVS…TKVRNSAGQD (227 aa)). Residues Cys101 and Cys325 are joined by a disulfide bond. [4Fe-4S] cluster-binding residues include Cys108, Cys112, and Cys115. Residues 153–154 (GE), Ser183, 206–208 (SLH), and Asn282 contribute to the S-adenosyl-L-methionine site. Residue Cys325 is the S-methylcysteine intermediate of the active site.

It belongs to the radical SAM superfamily. RlmN family. [4Fe-4S] cluster is required as a cofactor.

The protein resides in the cytoplasm. The chain is Probable RNA methyltransferase PA1839 from Pseudomonas aeruginosa (strain ATCC 15692 / DSM 22644 / CIP 104116 / JCM 14847 / LMG 12228 / 1C / PRS 101 / PAO1).